The chain runs to 377 residues: Methionine import ATP-binding protein MetN 2 (377 aa).

Residues 25 to 262 (IRIEHLSKTF…PKSAVARSFL (238 aa)) form the ABC transporter domain. ATP is bound at residue 59–66 (GRSGAGKS).

This sequence belongs to the ABC transporter superfamily. Methionine importer (TC 3.A.1.24) family. The complex is composed of two ATP-binding proteins (MetN), two transmembrane proteins (MetI) and a solute-binding protein (MetQ).

Its subcellular location is the cell inner membrane. It catalyses the reaction L-methionine(out) + ATP + H2O = L-methionine(in) + ADP + phosphate + H(+). It carries out the reaction D-methionine(out) + ATP + H2O = D-methionine(in) + ADP + phosphate + H(+). Part of the ABC transporter complex MetNIQ involved in methionine import. Responsible for energy coupling to the transport system. This Rhodopseudomonas palustris (strain ATCC BAA-98 / CGA009) protein is Methionine import ATP-binding protein MetN 2.